Consider the following 397-residue polypeptide: Potassium channel subfamily K member 4 (397 aa).

At 1 to 3 (MRS) the chain is on the cytoplasmic side. A helical transmembrane segment spans residues 4-24 (TTLLALLALVLLYLVSGALVF). Residues 25–88 (QALEQPHEQQ…WTNSSNHSSA (64 aa)) are Extracellular-facing. N-linked (GlcNAc...) asparagine glycosylation occurs at Asn-81. The segment at residues 89–103 (WNLGSAFFFSGTIIT) is an intramembrane region (helical). Residues Thr-104, Ile-105, Gly-106, and Tyr-107 each contribute to the K(+) site. A selectivity filter 1 region spans residues 104–109 (TIGYGN). Residues 104-110 (TIGYGNI) lie within the membrane without spanning it. Topologically, residues 111–118 (ALHTDAGR) are extracellular. A helical transmembrane segment spans residues 119 to 151 (LFCIFYALVGIPLFGMLLAGVGDRLGSSLRRGI). The Cytoplasmic segment spans residues 152–173 (GHIEAVFLKWHVPPGLVRMLSA). Residues 174-195 (VLFLLIGCLLFVLTPTFVFSYM) traverse the membrane as a helical segment. At 196–200 (ESWSK) the chain is on the extracellular side. The segment at residues 201–214 (LEAIYFVIVTLTTV) is an intramembrane region (helical). Thr-213, Val-214, Gly-215, and Phe-216 together coordinate K(+). A selectivity filter 2 region spans residues 213-218 (TVGFGD). Residues 215–220 (GFGDYV) lie within the membrane without spanning it. At 221–234 (PGDGTGQNSPAYQP) the chain is on the extracellular side. The helical transmembrane segment at 235–261 (LVWFWILFGLAYFASVLTTIGNWLRAV) threads the bilayer. Topologically, residues 262–397 (SRRTRAEMGG…GRLRDKAVPV (136 aa)) are cytoplasmic. Polar residues predominate over residues 282-292 (TVTARVTQRTG). Residues 282-397 (TVTARVTQRT…GRLRDKAVPV (116 aa)) form a disordered region. The span at 369–388 (PRGRRRPNPTKKPSRPRGPG) shows a compositional bias: basic residues.

Belongs to the two pore domain potassium channel (TC 1.A.1.8) family. As to quaternary structure, homodimer; disulfide-linked. Forms heterodimers with other 2-pore domain K(+) channel subunits, such as KCNK2 and KCNK10. As to expression, detected in brain, and at much lower levels in liver, skeletal muscle and testis.

The protein localises to the cell membrane. It is found in the cell projection. The protein resides in the axon. The catalysed reaction is K(+)(in) = K(+)(out). It carries out the reaction Rb(+)(in) = Rb(+)(out). The enzyme catalyses Cs(+)(in) = Cs(+)(out). With respect to regulation, activated by various stimuli including intracellular basic pH, mechanical stretch and heat and polyunsaturated fatty acids such as arachidonic acid. In terms of biological role, k(+) channel that conducts voltage-dependent outward rectifying currents upon membrane depolarization. Voltage sensing is coupled to K(+) electrochemical gradient in an 'ion flux gating' mode where outward but not inward ion flow opens the gate. Converts to voltage-independent 'leak' conductance mode upon stimulation by various stimuli including mechanical membrane stretch, basic pH, heat and lipids. Homo- and heterodimerizes to form functional channels with distinct regulatory and gating properties. At trigeminal A-beta afferent nerves, the heterodimer of KCNK2/TREK-1 and KCNK4/TRAAK is mostly coexpressed at nodes of Ranvier where it conducts voltage-independent mechanosensitive and thermosensitive currents, allowing rapid action potential repolarization, high speed and high frequence saltatory conduction on myelinated nerves to ensure prompt sensory responses. Permeable to other monovalent cations such as Rb(+) and Cs(+). This is Potassium channel subfamily K member 4 from Rattus norvegicus (Rat).